Here is a 344-residue protein sequence, read N- to C-terminus: Enoyl-[acyl-carrier-protein] reductase, mitochondrial (344 aa).

The N-terminal 14 residues, 1 to 14 (MLKVLSLRSALQRA), are a transit peptide targeting the mitochondrion. Tyr69 serves as the catalytic Proton donor. NADP(+)-binding positions include Asn142, 168–171 (NSAV), 191–193 (RSR), 255–258 (YGGM), 280–282 (FWM), and Lys338.

This sequence belongs to the zinc-containing alcohol dehydrogenase family. Quinone oxidoreductase subfamily. As to quaternary structure, homodimer.

The protein resides in the mitochondrion. The catalysed reaction is a 2,3-saturated acyl-[ACP] + NADP(+) = a (2E)-enoyl-[ACP] + NADPH + H(+). Its function is as follows. Catalyzes the NADPH-dependent reduction of trans-2-enoyl thioesters in mitochondrial fatty acid synthesis (fatty acid synthesis type II). Fatty acid chain elongation in mitochondria uses acyl carrier protein (ACP) as an acyl group carrier, but the enzyme accepts both ACP and CoA thioesters as substrates in vitro. May provide the octanoyl chain used for lipoic acid biosynthesis, regulating protein lipoylation and mitochondrial respiratory activity. Involved in iron homeostasis; affecting Fe-S cluster assembly and ceramide metabolism. Required for proper morphology and bioenergetic functions of mitochondria. Required for maintenance of neurons. The polypeptide is Enoyl-[acyl-carrier-protein] reductase, mitochondrial (Caenorhabditis elegans).